Reading from the N-terminus, the 419-residue chain is Argininosuccinate synthase (419 aa).

ATP is bound by residues 9 to 17 and Ala35; that span reads AYSGGLDTS. Residues Tyr86 and Ser91 each contribute to the L-citrulline site. 114-122 serves as a coordination point for ATP; sequence AHGATGKGN. L-aspartate contacts are provided by Thr118, Asn122, and Asp123. Asn122 provides a ligand contact to L-citrulline. L-citrulline contacts are provided by Arg126, Ser179, Ser188, Glu270, and Tyr282.

It belongs to the argininosuccinate synthase family. Type 1 subfamily. As to quaternary structure, homotetramer.

The catalysed reaction is L-citrulline + L-aspartate + ATP = 2-(N(omega)-L-arginino)succinate + AMP + diphosphate + H(+). It functions in the pathway amino-acid biosynthesis; L-arginine biosynthesis; L-arginine from L-ornithine and carbamoyl phosphate: step 2/3. Its pathway is nitrogen metabolism; urea cycle; (N(omega)-L-arginino)succinate from L-aspartate and L-citrulline: step 1/1. This is Argininosuccinate synthase from Drosophila melanogaster (Fruit fly).